Reading from the N-terminus, the 87-residue chain is DNA polymerase epsilon subunit C (87 aa).

In terms of assembly, DNA polymerase epsilon is a heterotetramer consisting of cdc20/Pol2, dpb2, dpb3, and dpb4. Also forms a heterodimer consisting dpb3 and dpb4. Interacts directly with cdc20/pol2 and dpb4.

Its subcellular location is the nucleus. In terms of biological role, as accessory component of the DNA polymerase epsilon (DNA polymerase II) participates in chromosomal DNA replication. It is required during synthesis of the leading and lagging DNA strands at the replication fork and binds at/or near replication origins and moves along DNA with the replication fork. It has 3'-5' proofreading exonuclease activity that correct errors arising during DNA replication. It is also involved in DNA synthesis during DNA repair. The dpb3-dpb4 dimer associates with histone deacetylases, chromatin remodelers, and histones and plays a crucial role in the inheritance of histone hypoacetylation and H3K9 methylation in heterochromatin. The dpb3-dpb4 dimer is also required for the recruitment of sir2 to heterochromatin. This chain is DNA polymerase epsilon subunit C, found in Schizosaccharomyces pombe (strain 972 / ATCC 24843) (Fission yeast).